Consider the following 207-residue polypeptide: Outer-membrane lipoprotein carrier protein (207 aa).

An N-terminal signal peptide occupies residues 1–23; the sequence is MMKPHNLFQFLAVCSLTVAVASA.

It belongs to the LolA family. In terms of assembly, monomer.

It is found in the periplasm. Participates in the translocation of lipoproteins from the inner membrane to the outer membrane. Only forms a complex with a lipoprotein if the residue after the N-terminal Cys is not an aspartate (The Asp acts as a targeting signal to indicate that the lipoprotein should stay in the inner membrane). This chain is Outer-membrane lipoprotein carrier protein, found in Neisseria gonorrhoeae (strain ATCC 700825 / FA 1090).